The following is a 397-amino-acid chain: CCA-adding enzyme (397 aa).

Residues glycine 26 and arginine 29 each coordinate ATP. Positions 26 and 29 each coordinate CTP. Mg(2+) contacts are provided by aspartate 39 and aspartate 41. ATP is bound by residues arginine 110, aspartate 153, arginine 156, arginine 159, and arginine 162. Residues arginine 110, aspartate 153, arginine 156, arginine 159, and arginine 162 each coordinate CTP.

This sequence belongs to the tRNA nucleotidyltransferase/poly(A) polymerase family. Bacterial CCA-adding enzyme type 3 subfamily. As to quaternary structure, homodimer. Mg(2+) serves as cofactor.

It catalyses the reaction a tRNA precursor + 2 CTP + ATP = a tRNA with a 3' CCA end + 3 diphosphate. It carries out the reaction a tRNA with a 3' CCA end + 2 CTP + ATP = a tRNA with a 3' CCACCA end + 3 diphosphate. Catalyzes the addition and repair of the essential 3'-terminal CCA sequence in tRNAs without using a nucleic acid template. Adds these three nucleotides in the order of C, C, and A to the tRNA nucleotide-73, using CTP and ATP as substrates and producing inorganic pyrophosphate. tRNA 3'-terminal CCA addition is required both for tRNA processing and repair. Also involved in tRNA surveillance by mediating tandem CCA addition to generate a CCACCA at the 3' terminus of unstable tRNAs. While stable tRNAs receive only 3'-terminal CCA, unstable tRNAs are marked with CCACCA and rapidly degraded. The sequence is that of CCA-adding enzyme from Bacillus cereus (strain Q1).